The primary structure comprises 315 residues: Methionyl-tRNA formyltransferase (315 aa).

(6S)-5,6,7,8-tetrahydrofolate is bound at residue 113-116 (SLLP).

Belongs to the Fmt family.

It catalyses the reaction L-methionyl-tRNA(fMet) + (6R)-10-formyltetrahydrofolate = N-formyl-L-methionyl-tRNA(fMet) + (6S)-5,6,7,8-tetrahydrofolate + H(+). Attaches a formyl group to the free amino group of methionyl-tRNA(fMet). The formyl group appears to play a dual role in the initiator identity of N-formylmethionyl-tRNA by promoting its recognition by IF2 and preventing the misappropriation of this tRNA by the elongation apparatus. The chain is Methionyl-tRNA formyltransferase from Pectobacterium carotovorum subsp. carotovorum (strain PC1).